The chain runs to 326 residues: Ras association domain-containing protein 2 (326 aa).

The disordered stretch occupies residues 111-133 (EVDAPPEGDQMPSSTDSRGLKPL). The Ras-associating domain maps to 176–264 (YNHKTSVFTP…SKVFLMEKDQ (89 aa)). The region spanning 272–319 (VAQYIKFEMPVLKSFIQKLQEEEDREVKKLMRKYTVLRLMIRQRLEEI) is the SARAH domain.

Interacts directly with activated KRAS in a GTP-dependent manner. Interacts (via SARAH domain) with STK3/MST2 and STK4/MST1. Phosphorylated by STK3/MST2 and STK4/MST1. In terms of tissue distribution, widely expressed with highest levels in brain, placenta, peripheral blood and lung. Frequently down-regulated in lung tumor cell lines.

The protein resides in the nucleus. The protein localises to the cytoplasm. Its subcellular location is the chromosome. It localises to the centromere. It is found in the kinetochore. Its function is as follows. Potential tumor suppressor. Acts as a KRAS-specific effector protein. May promote apoptosis and cell cycle arrest. Stabilizes STK3/MST2 by protecting it from proteasomal degradation. This Homo sapiens (Human) protein is Ras association domain-containing protein 2 (RASSF2).